We begin with the raw amino-acid sequence, 188 residues long: Oleosin S2-2 (188 aa).

Alanine 2 bears the N-acetylalanine mark. A polar region spans residues 2–51; the sequence is ATVERRVQVDPTDKRIHLQPQYEGDVGYGYGYGGRADYKSSGPSSNQIVA. Helical transmembrane passes span 49–69, 74–94, and 96–116; these read IVAL…AGLT, VIGL…IVPA, and ITIG…LTGL. Positions 52–125 are hydrophobic; the sequence is LIVGVPVGGS…LSSVSWVLNY (74 aa). A disordered region spans residues 164 to 188; sequence DKAHEAHDTSLTTETTEPGKTRRHT. Residues 172 to 181 are compositionally biased toward polar residues; that stretch reads TSLTTETTEP.

The protein belongs to the oleosin family.

The protein resides in the lipid droplet. The protein localises to the membrane. In terms of biological role, may have a structural role to stabilize the lipid body during desiccation of the seed by preventing coalescence of the oil. Probably interacts with both lipid and phospholipid moieties of lipid bodies. May also provide recognition signals for specific lipase anchorage in lipolysis during seedling growth. The polypeptide is Oleosin S2-2 (S2) (Brassica napus (Rape)).